We begin with the raw amino-acid sequence, 532 residues long: Ankyrin repeat-containing protein At2g01680 (532 aa).

ANK repeat units lie at residues 9-38 (LTHQAFFSSVRSGDLSQLQQLVDNLTGDEL), 58-89 (AGETAVYISAAENLEDIFRYLIRFSSLETVKI), 93-122 (SDMNAFHVAAKRGHLGIVKELLRLWPELCR), 127-156 (SNTSPLYAAAVQDHLEIVNAMLDVDPSCAM), 161-190 (NGKTSLHTAGRYGLLRIVKALIEKDAAIVG), 195-224 (KGQTALHMAVKGRSLEVVEEILQADYTILN), and 229-259 (KGNTALHIATRKARPQITSLLLTFTAIEVNA). A run of 4 helical transmembrane segments spans residues 354–374 (ITVVAVLFASIAFLAIFNLPG), 396–416 (VFCLLNATSLFISLAVVVVQI), 436–456 (LMWAACACTFGAFLAIAFAVV), and 467–487 (ITLLGAPILVGTLASMCYFVF).

It localises to the membrane. In Arabidopsis thaliana (Mouse-ear cress), this protein is Ankyrin repeat-containing protein At2g01680.